A 451-amino-acid polypeptide reads, in one-letter code: Phenylalanine-4-hydroxylase (451 aa).

Position 16 is a phosphoserine; by PKA (serine 16). An ACT domain is found at 35 to 113 (SLIFSLKEEV…TVHELSRDKK (79 aa)). Positions 284, 289, and 329 each coordinate Fe cation.

Belongs to the biopterin-dependent aromatic amino acid hydroxylase family. Homodimer and homotetramer. Fe(2+) serves as cofactor. Phosphorylation at Ser-16 increases basal activity and facilitates activation by the substrate phenylalanine.

The catalysed reaction is (6R)-L-erythro-5,6,7,8-tetrahydrobiopterin + L-phenylalanine + O2 = (4aS,6R)-4a-hydroxy-L-erythro-5,6,7,8-tetrahydrobiopterin + L-tyrosine. It participates in amino-acid degradation; L-phenylalanine degradation; acetoacetate and fumarate from L-phenylalanine: step 1/6. With respect to regulation, N-terminal region of PAH is thought to contain allosteric binding sites for phenylalanine and to constitute an 'inhibitory' domain that regulates the activity of a catalytic domain in the C-terminal portion of the molecule. In terms of biological role, catalyzes the hydroxylation of L-phenylalanine to L-tyrosine. In Bos taurus (Bovine), this protein is Phenylalanine-4-hydroxylase (PAH).